Reading from the N-terminus, the 71-residue chain is Ceratotoxin-A (71 aa).

The N-terminal stretch at 1-23 is a signal peptide; it reads MANLKAVFLICIVAFIAFQCVVA. Propeptides lie at residues 24 to 35 and 65 to 71; these read EPAAEDSIVVKR and VAAGLVG.

Homomer of four to six subunits.

Its subcellular location is the secreted. Its function is as follows. Female-specific peptides with potent activity against Gram-positive and Gram-negative bacteria. They have as well hemolytic activity. In Ceratitis capitata (Mediterranean fruit fly), this protein is Ceratotoxin-A (CTXA2).